Here is a 1279-residue protein sequence, read N- to C-terminus: Cellulose synthase operon protein C (1279 aa).

Residues 1-21 form the signal peptide; sequence MRRHTLAIAILAALASTASVA. TPR repeat units lie at residues 27 to 60, 62 to 94, 218 to 250, 306 to 339, 384 to 417, 460 to 493, 495 to 527, 606 to 639, 719 to 752, and 787 to 820; these read QSLL…SPDQ, DALY…SPVP, ADET…HPDD, VDAL…PGGA, PGAA…HPGD, ALRA…DPEN, WTRF…QPNQ, PERV…NPNP, ALGV…NPNN, and PEIL…ENAM.

It participates in glycan metabolism; bacterial cellulose biosynthesis. Functionally, required for maximal bacterial cellulose synthesis. The sequence is that of Cellulose synthase operon protein C (bscS) from Pseudomonas fluorescens (strain SBW25).